We begin with the raw amino-acid sequence, 95 residues long: Co-chaperonin GroES (95 aa).

Belongs to the GroES chaperonin family. As to quaternary structure, heptamer of 7 subunits arranged in a ring. Interacts with the chaperonin GroEL.

The protein localises to the cytoplasm. Functionally, together with the chaperonin GroEL, plays an essential role in assisting protein folding. The GroEL-GroES system forms a nano-cage that allows encapsulation of the non-native substrate proteins and provides a physical environment optimized to promote and accelerate protein folding. GroES binds to the apical surface of the GroEL ring, thereby capping the opening of the GroEL channel. In Cereibacter sphaeroides (strain ATCC 17025 / ATH 2.4.3) (Rhodobacter sphaeroides), this protein is Co-chaperonin GroES.